A 125-amino-acid polypeptide reads, in one-letter code: Homeobox protein HD-8 (125 aa).

The segment at residues 30–89 (EPDTRTRKTTFQMMVLKEVFKIAPHPSTLTKADLALMIKLPLKAVQIWFQNERSRKERGG) is a DNA-binding region (homeobox).

It localises to the nucleus. This Encephalitozoon cuniculi (strain GB-M1) (Microsporidian parasite) protein is Homeobox protein HD-8 (HD-8).